A 191-amino-acid chain; its full sequence is GDP-mannose pyrophosphatase (191 aa).

GDP-alpha-D-mannose is bound by residues Tyr17, 38–40, Arg67, and 85–87; these read KRE and AGL. One can recognise a Nudix hydrolase domain in the interval 43–180; that stretch reads DRGNGATILL…EIRDGKTVLL (138 aa). Mg(2+) contacts are provided by Ala85, Glu100, and Glu104. The Nudix box motif lies at 86–106; that stretch reads GLLDNDEPEVCIRKEAIEETG. Residues Glu104, Glu127, 150 to 151, and Lys176 contribute to the GDP-alpha-D-mannose site; that span reads DE. Glu151 is a Mg(2+) binding site.

Belongs to the Nudix hydrolase family. NudK subfamily. Homodimer. Mg(2+) serves as cofactor.

It carries out the reaction GDP-alpha-D-mannose + H2O = alpha-D-mannose 1-phosphate + GMP + 2 H(+). In terms of biological role, nucleoside diphosphate sugar hydrolase that hydrolyzes GDP-mannose as its preferred substrate, yielding GMP and mannose-1-phosphate. The chain is GDP-mannose pyrophosphatase (nudK) from Escherichia coli (strain K12 / DH10B).